The primary structure comprises 420 residues: L-cysteine:1D-myo-inositol 2-amino-2-deoxy-alpha-D-glucopyranoside ligase (420 aa).

Cys-46 lines the Zn(2+) pocket. Residues 46-49 (CGIT), Thr-61, and 84-86 (NVT) contribute to the L-cysteinyl-5'-AMP site. A 'HIGH' region motif is present at residues 48–58 (ITPYDSTHLGH). The short motif at 194–199 (ERGGDP) is the 'ERGGDP' region element. Trp-235 provides a ligand contact to L-cysteinyl-5'-AMP. Position 239 (Cys-239) interacts with Zn(2+). 257–259 (GTD) contacts L-cysteinyl-5'-AMP. His-264 provides a ligand contact to Zn(2+). Residue Val-291 participates in L-cysteinyl-5'-AMP binding. The 'KMSKS' region signature appears at 297-301 (KMSKS).

Belongs to the class-I aminoacyl-tRNA synthetase family. MshC subfamily. In terms of assembly, monomer. It depends on Zn(2+) as a cofactor.

It carries out the reaction 1D-myo-inositol 2-amino-2-deoxy-alpha-D-glucopyranoside + L-cysteine + ATP = 1D-myo-inositol 2-(L-cysteinylamino)-2-deoxy-alpha-D-glucopyranoside + AMP + diphosphate + H(+). Catalyzes the ATP-dependent condensation of GlcN-Ins and L-cysteine to form L-Cys-GlcN-Ins. This is L-cysteine:1D-myo-inositol 2-amino-2-deoxy-alpha-D-glucopyranoside ligase from Beutenbergia cavernae (strain ATCC BAA-8 / DSM 12333 / CCUG 43141 / JCM 11478 / NBRC 16432 / NCIMB 13614 / HKI 0122).